A 662-amino-acid polypeptide reads, in one-letter code: PAN2-PAN3 deadenylation complex subunit PAN3 (662 aa).

Disordered regions lie at residues 1-29 (MASAGKPALDDSRRGTGSPKIKGRENAKD) and 53-133 (DPHK…DTVT). Residues 26 to 55 (NAKDTLCRNITIYGRCRYEDKGCAFNHDPH) form a C3H1-type zinc finger. Over residues 75 to 102 (SFTPSLLSSNGSSPTSTPATTKKMTTIS) the composition is skewed to low complexity. The span at 115 to 133 (SVVSRSNASTPGLRQDTVT) shows a compositional bias: polar residues. Positions 263–525 (QTLPNTQLPA…NIDVFITGIS (263 aa)) are pseudokinase domain. ATP contacts are provided by residues R315, 364 to 371 (DYHPLSKT), and 425 to 426 (SK). The stretch at 526–564 (SQLMSTFDSALHLDDQLTSDLSRELENGRLVRLMAKLNF) forms a coiled coil. A knob domain region spans residues 565–662 (VNERPEYEHD…ALMKPARRMH (98 aa)).

It belongs to the protein kinase superfamily. PAN3 family. In terms of assembly, homodimer. Forms a heterotrimer with a catalytic subunit pan2 to form the poly(A)-nuclease (PAN) deadenylation complex. Interacts (via PAM-2 motif) with poly(A)-binding protein pab1 (via PABC domain), conferring substrate specificity of the enzyme complex.

The protein resides in the cytoplasm. Its function is as follows. Regulatory subunit of the poly(A)-nuclease (PAN) deadenylation complex, one of two cytoplasmic mRNA deadenylases involved in mRNA turnover. PAN specifically shortens poly(A) tails of RNA and the activity is stimulated by poly(A)-binding protein pab1. PAN deadenylation is followed by rapid degradation of the shortened mRNA tails by the CCR4-NOT complex. Deadenylated mRNAs are then degraded by two alternative mechanisms, namely exosome-mediated 3'-5' exonucleolytic degradation, or deadenylation-dependent mRNA decaping and subsequent 5'-3' exonucleolytic degradation by xrn1. May also be involved in post-transcriptional maturation of mRNA poly(A) tails. pan3 acts as a positive regulator for PAN activity, recruiting the catalytic subunit pan2 to mRNA via its interaction with RNA and with pab1. The protein is PAN2-PAN3 deadenylation complex subunit PAN3 of Aspergillus fumigatus (strain ATCC MYA-4609 / CBS 101355 / FGSC A1100 / Af293) (Neosartorya fumigata).